Consider the following 229-residue polypeptide: Peptidase E (229 aa).

Catalysis depends on charge relay system residues Ser-120, Asp-135, and His-157.

Belongs to the peptidase S51 family.

The protein resides in the cytoplasm. The enzyme catalyses Dipeptidase E catalyzes the hydrolysis of dipeptides Asp-|-Xaa. It does not act on peptides with N-terminal Glu, Asn or Gln, nor does it cleave isoaspartyl peptides.. Functionally, hydrolyzes dipeptides containing N-terminal aspartate residues. May play a role in allowing the cell to use peptide aspartate to spare carbon otherwise required for the synthesis of the aspartate family of amino acids. The chain is Peptidase E from Salmonella newport (strain SL254).